The following is a 425-amino-acid chain: Homogentisate 1,2-dioxygenase (425 aa).

Catalysis depends on histidine 283, which acts as the Proton acceptor. Fe cation is bound by residues histidine 326 and glutamate 332. Residues tyrosine 341 and histidine 362 each coordinate homogentisate. Residue histidine 362 coordinates Fe cation.

The protein belongs to the homogentisate dioxygenase family. In terms of assembly, hexamer; dimer of trimers. Fe cation is required as a cofactor.

The catalysed reaction is homogentisate + O2 = 4-maleylacetoacetate + H(+). It participates in amino-acid degradation; L-phenylalanine degradation; acetoacetate and fumarate from L-phenylalanine: step 4/6. In terms of biological role, involved in the catabolism of homogentisate (2,5-dihydroxyphenylacetate or 2,5-OH-PhAc), a central intermediate in the degradation of phenylalanine and tyrosine. Catalyzes the oxidative ring cleavage of the aromatic ring of homogentisate to yield maleylacetoacetate. The polypeptide is Homogentisate 1,2-dioxygenase (Caulobacter vibrioides (strain ATCC 19089 / CIP 103742 / CB 15) (Caulobacter crescentus)).